The primary structure comprises 149 residues: Large ribosomal subunit protein bL9 (149 aa).

It belongs to the bacterial ribosomal protein bL9 family.

Binds to the 23S rRNA. This is Large ribosomal subunit protein bL9 from Helicobacter pylori (strain HPAG1).